We begin with the raw amino-acid sequence, 261 residues long: Acetylglutamate kinase (261 aa).

Substrate contacts are provided by residues 48–49 (GG), Arg-70, and Asn-164.

Belongs to the acetylglutamate kinase family. ArgB subfamily.

It is found in the cytoplasm. The catalysed reaction is N-acetyl-L-glutamate + ATP = N-acetyl-L-glutamyl 5-phosphate + ADP. It functions in the pathway amino-acid biosynthesis; L-arginine biosynthesis; N(2)-acetyl-L-ornithine from L-glutamate: step 2/4. Functionally, catalyzes the ATP-dependent phosphorylation of N-acetyl-L-glutamate. The polypeptide is Acetylglutamate kinase (Roseiflexus sp. (strain RS-1)).